Here is a 304-residue protein sequence, read N- to C-terminus: MLLSTHLLFVITTLVTSLLHPIDGHAVKRSGSLQQVTDFGDNPTNVGMYIYVPNNLASNPGIVVAIHYCTGTGPGYYGDSPYATLSEQYGFIVIYPSSPYSGGCWDVSSQATLTHNGGGNSNSIANMVTWTISKYGADSSKVFVTGSSSGAMMTNVMAATYPELFAAATVYSGVSAGCFYSNTNQVDGWNSTCAQGDVITTPEHWASIAEAMYSGYSGSRPRMQIYHGSIDTTLYPQNYYETCKQWAGVFGYDYSAPEKTEANTPQTNYETTIWGDSLQGIFATGVGHTVPIHGDKDMEWFGFA.

The N-terminal stretch at 1–24 (MLLSTHLLFVITTLVTSLLHPIDG) is a signal peptide. Ser-148 serves as the catalytic Charge relay system. An N-linked (GlcNAc...) asparagine glycan is attached at Asn-190.

This sequence belongs to the carbohydrate esterase 1 (CE1) family. AxeA subfamily. Monomer.

It localises to the secreted. The enzyme catalyses Deacetylation of xylans and xylo-oligosaccharides.. It functions in the pathway glycan degradation; xylan degradation. Its activity is regulated as follows. Inactivated by di-isopropylfluorophosphate and phenylmethylsulfonylfluorid (PMSF), a specific inhibitor of serine esterases. Functionally, acetylxylan esterase involved in the hydrolysis of xylan, a major structural heterogeneous polysaccharide found in plant biomass representing the second most abundant polysaccharide in the biosphere, after cellulose. Degrades acetylated xylans by cleaving acetyl side groups from the hetero-xylan backbone. This is Acetylxylan esterase A (axeA) from Aspergillus awamori (Black koji mold).